Reading from the N-terminus, the 786-residue chain is Ribosome biogenesis protein BOP1 homolog (786 aa).

Over residues 1–11 (MTKKLTIKRKV) the composition is skewed to basic residues. The interval 1–161 (MTKKLTIKRK…DSDTSDEEDI (161 aa)) is disordered. Acidic residues-rich tracts occupy residues 28 to 37 (DNEEEEEEDL), 46 to 55 (EDSTDDEGID), 62 to 74 (SSED…DEEG), and 86 to 103 (SGDD…EDDA). Positions 104-113 (DAKKSSKNND) are enriched in basic and acidic residues. The span at 151–160 (ADSDTSDEED) shows a compositional bias: acidic residues. 7 WD repeats span residues 447-488 (GHTD…RTIE), 490-528 (EDVV…KLLV), 572-614 (THFK…SQIP), 617-655 (KSKG…LIKK), 658-697 (TNSK…KPYQ), 701-740 (LHRN…DLLQ), and 756-786 (REEF…RLFT).

The protein belongs to the WD repeat BOP1/ERB1 family.

The protein localises to the nucleus. Its subcellular location is the nucleolus. The protein resides in the nucleoplasm. Functionally, required for maturation of ribosomal RNAs and formation of the large ribosomal subunit. This chain is Ribosome biogenesis protein BOP1 homolog, found in Drosophila pseudoobscura pseudoobscura (Fruit fly).